The chain runs to 60 residues: Large ribosomal subunit protein bL32 (60 aa).

The interval 1 to 44 (MAVQQNKKSRSARDMRRSHDALSENALSVEKTTGEVHLRHHVSP) is disordered. Positions 11–22 (SARDMRRSHDAL) are enriched in basic and acidic residues.

The protein belongs to the bacterial ribosomal protein bL32 family.

The chain is Large ribosomal subunit protein bL32 from Pseudomonas putida (strain W619).